A 517-amino-acid chain; its full sequence is tRNA-2-methylthio-N(6)-dimethylallyladenosine synthase (517 aa).

The MTTase N-terminal domain occupies 29–146 (RTYQVRTYGC…LPTLLERARH (118 aa)). Residues Cys38, Cys75, Cys109, Cys183, Cys187, and Cys190 each contribute to the [4Fe-4S] cluster site. Residues 169–405 (RESAYAAWVS…VELQESISLQ (237 aa)) form the Radical SAM core domain. A TRAM domain is found at 408 to 475 (QALVGQTVEL…PHHLIADAGV (68 aa)).

The protein belongs to the methylthiotransferase family. MiaB subfamily. As to quaternary structure, monomer. It depends on [4Fe-4S] cluster as a cofactor.

It localises to the cytoplasm. The enzyme catalyses N(6)-dimethylallyladenosine(37) in tRNA + (sulfur carrier)-SH + AH2 + 2 S-adenosyl-L-methionine = 2-methylsulfanyl-N(6)-dimethylallyladenosine(37) in tRNA + (sulfur carrier)-H + 5'-deoxyadenosine + L-methionine + A + S-adenosyl-L-homocysteine + 2 H(+). Functionally, catalyzes the methylthiolation of N6-(dimethylallyl)adenosine (i(6)A), leading to the formation of 2-methylthio-N6-(dimethylallyl)adenosine (ms(2)i(6)A) at position 37 in tRNAs that read codons beginning with uridine. In Mycolicibacterium paratuberculosis (strain ATCC BAA-968 / K-10) (Mycobacterium paratuberculosis), this protein is tRNA-2-methylthio-N(6)-dimethylallyladenosine synthase.